The sequence spans 526 residues: Microphthalmia-associated transcription factor (526 aa).

Residues 20 to 54 are disordered; the sequence is EPKTYYELKSQPLKSSSSAEHSGASKPPLSSSTMT. Positions 34–44 are enriched in low complexity; that stretch reads SSSSAEHSGAS. At S180 the chain carries Phosphoserine; by MAPK. Residue K289 forms a Glycyl lysine isopeptide (Lys-Gly) (interchain with G-Cter in SUMO) linkage. The bHLH domain maps to 311 to 364; the sequence is QKKDNHNLIERRRRFNINDRIKELGTLIPKSNDPDMRWNKGTILKASVDYIRKL. Residues 355–401 are a coiled coil; it reads KASVDYIRKLQREQQRAKDLENRQKKLEHANRHLLLRVQELEMQARA. The segment at 374 to 395 is leucine-zipper; that stretch reads LENRQKKLEHANRHLLLRVQEL. Position 405 is a phosphoserine; by GSK3 (S405). S414 carries the phosphoserine modification. K423 is covalently cross-linked (Glycyl lysine isopeptide (Lys-Gly) (interchain with G-Cter in SUMO)). A Phosphoserine modification is found at S491. Positions 496-526 are disordered; the sequence is TDPLLSSVSPGASKTSSRRSSMSAEETEHAC. Over residues 507-519 the composition is skewed to low complexity; the sequence is ASKTSSRRSSMSA. Position 516 is a phosphoserine; by RPS6KA1 (S516).

The protein belongs to the MiT/TFE family. Homodimer or heterodimer; dimerization is mediated via the coiled coil region. Efficient DNA binding requires dimerization with another bHLH protein. Binds DNA in the form of homodimer or heterodimer with either TFE3, TFEB or TFEC. Identified in a complex with HINT1 and CTNNB1. Interacts with KARS1. Interacts with VSX2. In terms of processing, phosphorylation at Ser-405 significantly enhances the ability to bind the tyrosinase promoter. Phosphorylated at Ser-180 and Ser-516 following KIT signaling, triggering a short live activation: Phosphorylation at Ser-180 and Ser-516 by MAPK and RPS6KA1, respectively, activate the transcription factor activity but also promote ubiquitination and subsequent degradation by the proteasome. Phosphorylated in response to blue light (415nm). Post-translationally, ubiquitinated following phosphorylation at Ser-180, leading to subsequent degradation by the proteasome. Deubiquitinated by USP13, preventing its degradation.

Its subcellular location is the nucleus. The protein localises to the cytoplasm. Functionally, transcription factor that regulates the expression of genes with essential roles in cell differentiation, proliferation and survival. Binds to M-boxes (5'-TCATGTG-3') and symmetrical DNA sequences (E-boxes) (5'-CACGTG-3') found in the promoters of target genes, such as BCL2 and tyrosinase (TYR). Plays an important role in melanocyte development by regulating the expression of tyrosinase (TYR) and tyrosinase-related protein 1 (TYRP1). Plays a critical role in the differentiation of various cell types, such as neural crest-derived melanocytes, mast cells, osteoclasts and optic cup-derived retinal pigment epithelium. The chain is Microphthalmia-associated transcription factor (Mitf) from Rattus norvegicus (Rat).